A 77-amino-acid polypeptide reads, in one-letter code: Large ribosomal subunit protein eL14 (77 aa).

It belongs to the eukaryotic ribosomal protein eL14 family.

This chain is Large ribosomal subunit protein eL14, found in Methanococcus vannielii (strain ATCC 35089 / DSM 1224 / JCM 13029 / OCM 148 / SB).